The primary structure comprises 173 residues: Adenine phosphoribosyltransferase (173 aa).

Belongs to the purine/pyrimidine phosphoribosyltransferase family. As to quaternary structure, homodimer.

The protein localises to the cytoplasm. The enzyme catalyses AMP + diphosphate = 5-phospho-alpha-D-ribose 1-diphosphate + adenine. It functions in the pathway purine metabolism; AMP biosynthesis via salvage pathway; AMP from adenine: step 1/1. Its function is as follows. Catalyzes a salvage reaction resulting in the formation of AMP, that is energically less costly than de novo synthesis. This is Adenine phosphoribosyltransferase from Thermoanaerobacter sp. (strain X514).